Here is a 120-residue protein sequence, read N- to C-terminus: UPF0344 protein LMOf2365_2298 (120 aa).

The next 4 membrane-spanning stretches (helical) occupy residues 3–23 (GYIH…ALLI), 33–53 (MLQM…IMMV), 62–82 (ILAI…EMLL), and 92–112 (GMFL…GFYL).

Belongs to the UPF0344 family.

The protein resides in the cell membrane. The polypeptide is UPF0344 protein LMOf2365_2298 (Listeria monocytogenes serotype 4b (strain F2365)).